The sequence spans 326 residues: tRNA-cytidine(32) 2-sulfurtransferase (326 aa).

The short motif at 63 to 68 is the PP-loop motif element; the sequence is SGGKDS. Residues C138, C141, and C229 each coordinate [4Fe-4S] cluster.

The protein belongs to the TtcA family. In terms of assembly, homodimer. The cofactor is Mg(2+). It depends on [4Fe-4S] cluster as a cofactor.

The protein resides in the cytoplasm. The catalysed reaction is cytidine(32) in tRNA + S-sulfanyl-L-cysteinyl-[cysteine desulfurase] + AH2 + ATP = 2-thiocytidine(32) in tRNA + L-cysteinyl-[cysteine desulfurase] + A + AMP + diphosphate + H(+). It functions in the pathway tRNA modification. In terms of biological role, catalyzes the ATP-dependent 2-thiolation of cytidine in position 32 of tRNA, to form 2-thiocytidine (s(2)C32). The sulfur atoms are provided by the cysteine/cysteine desulfurase (IscS) system. The chain is tRNA-cytidine(32) 2-sulfurtransferase from Leptothrix cholodnii (strain ATCC 51168 / LMG 8142 / SP-6) (Leptothrix discophora (strain SP-6)).